Consider the following 701-residue polypeptide: Arachidonate 12-lipoxygenase, 12R-type (701 aa).

A PLAT domain is found at 2-119; the sequence is ATYKVKVATG…TLSLREATGK (118 aa). A Lipoxygenase domain is found at 120-701; sequence TTADDTLPIL…PVLIENSISI (582 aa). 5 residues coordinate Fe cation: His398, His403, His578, Asn582, and Ile701.

The protein belongs to the lipoxygenase family. It depends on Fe cation as a cofactor.

Its subcellular location is the cytoplasm. It localises to the perinuclear region. The enzyme catalyses (5Z,8Z,11Z,14Z)-eicosatetraenoate + O2 = (12R)-hydroperoxy-(5Z,8Z,10E,14Z)-eicosatetraenoate. It carries out the reaction N-[omega-(9Z,12Z)-octadecadienoyloxy]acyl-beta-D-glucosyl-(1&lt;-&gt;1)-octadecasphing-4E-enine + O2 = N-[omega-(9R)-hydroperoxy-(10E,12Z)-octadecadienoyloxy]acyl-beta-D-glucosyl-(1&lt;-&gt;1)-octadecasphing-4E-enine. The catalysed reaction is a N-[omega-(9Z,12Z)-octadecadienoyloxy]-acylsphin-4E-enine + O2 = a N-[omega-(9R)-hydroperoxy-(10E,12Z)-octadecadienoyloxy]-acylsphin-4E-enine. It catalyses the reaction (6Z,9Z,12Z)-octadecatrienoate + O2 = 10-hydroperoxy-(6Z,8E,12Z)-octadecatrienoate. The enzyme catalyses (4Z,7Z,10Z,13Z,16Z,19Z)-docosahexaenoate + O2 = 14-hydroperoxy-(4Z,7Z,10Z,12E,16Z,19Z)-docosahexaenoate. It carries out the reaction (8Z,11Z,14Z)-eicosatrienoate + O2 = (8Z,10E,14Z)-12-hydroperoxyeicosatrienoate. The catalysed reaction is (5Z,8Z,11Z,14Z,17Z)-eicosapentaenoate + O2 = (5Z,7Z,8Z,10E,14Z,17Z)-12-hydroperoxyeicosapentaenoate. It catalyses the reaction (6Z,9Z,12Z)-octadecatrienoate + O2 = 10R-hydroperoxy-(6Z,8E,12Z)-octadecatrienoate. The enzyme catalyses 1-O-methyl-(5Z,8Z,11Z,14Z)-eicosatetraenoate + O2 = 1-O-methyl (5Z,8Z,10E,12R,14Z)-hydroperoxyiecosatetraenoate. It carries out the reaction 1-O-methyl-(5Z,8Z,11Z,14Z)-eicosatetraenoate + O2 = 1-O-methyl-8-hydroperoxy-(5Z,9E,11Z,14Z)-eicosatetraenoate. The catalysed reaction is 1-O-methyl-(5Z,8Z,11Z,14Z)-eicosatetraenoate + O2 = 1-O-methyl-(8R)-hydroperoxy-(5Z,9E,11Z,14Z)-eicosatrienoate. It catalyses the reaction 1-O-methyl-(9Z,12Z)-octadecadienoate + O2 = 1-O-methyl-(9R)-hydroperoxy-(10E,12Z)-octadecadienoate. The enzyme catalyses 1-O-methyl-20-hydroxy-(5Z,8Z,11Z,14Z)-eicosatetraenoate + O2 = 1-O-methyl-8-hydroperoxy-20-hydroxy-(5Z,9E,11Z,14Z)-eicosatetraenoate. It carries out the reaction 1-O-methyl-20-hydroxy-(5Z,8Z,11Z,14Z)-eicosatetraenoate + O2 = 1-O-methyl-12-hydroperoxy-20-hydroxy-(5Z,8Z,10E,14Z)-eicosatetraenoate. The catalysed reaction is 1-O-methyl-20-hydroxy-(5Z,8Z,11Z,14Z)-eicosatetraenoate + O2 = 1-O-methyl-9-hydroperoxy-20-hydroxy-(5Z,7E,11Z,14Z)-eicosatetraenoate. It catalyses the reaction 1-O-methyl-(9Z,12Z)-octadecadienoate + O2 = 1-O-methyl-(13S)-hydroperoxy-(9Z,11E)-octadecadienoate. Its pathway is lipid metabolism; hydroperoxy eicosatetraenoic acid biosynthesis. It participates in lipid metabolism; sphingolipid metabolism. Increased by calcium. Catalyzes the regio and stereo-specific incorporation of a single molecule of dioxygen into free and esterified polyunsaturated fatty acids generating lipid hydroperoxides that can be further reduced to the corresponding hydroxy species. In the skin, acts upstream of ALOXE3 on the lineolate moiety of esterified omega-hydroxyacyl-sphingosine (EOS) ceramides to produce an epoxy-ketone derivative, a crucial step in the conjugation of omega-hydroxyceramide to membrane proteins. Therefore plays a crucial role in the synthesis of corneocytes lipid envelope and the establishment of the skin barrier to water loss. May also play a role in the regulation of the expression of airway mucins. The polypeptide is Arachidonate 12-lipoxygenase, 12R-type (Rattus norvegicus (Rat)).